The primary structure comprises 337 residues: Phosphoribosylformylglycinamidine cyclo-ligase (337 aa).

It belongs to the AIR synthase family.

It localises to the cytoplasm. The enzyme catalyses 2-formamido-N(1)-(5-O-phospho-beta-D-ribosyl)acetamidine + ATP = 5-amino-1-(5-phospho-beta-D-ribosyl)imidazole + ADP + phosphate + H(+). It participates in purine metabolism; IMP biosynthesis via de novo pathway; 5-amino-1-(5-phospho-D-ribosyl)imidazole from N(2)-formyl-N(1)-(5-phospho-D-ribosyl)glycinamide: step 2/2. This chain is Phosphoribosylformylglycinamidine cyclo-ligase, found in Pseudothermotoga lettingae (strain ATCC BAA-301 / DSM 14385 / NBRC 107922 / TMO) (Thermotoga lettingae).